Consider the following 949-residue polypeptide: Glycine dehydrogenase (decarboxylating) (949 aa).

Residue Lys699 is modified to N6-(pyridoxal phosphate)lysine.

This sequence belongs to the GcvP family. The glycine cleavage system is composed of four proteins: P, T, L and H. Requires pyridoxal 5'-phosphate as cofactor.

It carries out the reaction N(6)-[(R)-lipoyl]-L-lysyl-[glycine-cleavage complex H protein] + glycine + H(+) = N(6)-[(R)-S(8)-aminomethyldihydrolipoyl]-L-lysyl-[glycine-cleavage complex H protein] + CO2. The glycine cleavage system catalyzes the degradation of glycine. The P protein binds the alpha-amino group of glycine through its pyridoxal phosphate cofactor; CO(2) is released and the remaining methylamine moiety is then transferred to the lipoamide cofactor of the H protein. This Roseobacter denitrificans (strain ATCC 33942 / OCh 114) (Erythrobacter sp. (strain OCh 114)) protein is Glycine dehydrogenase (decarboxylating).